A 526-amino-acid chain; its full sequence is Cytochrome P450 monooxygenase patI (526 aa).

The Cytoplasmic segment spans residues 1–6 (MDILQL). A helical membrane pass occupies residues 7 to 29 (APTHLLAILLSSTSALFLITYLL). Over 30-526 (RAGHRPSDLP…EAQEVFARFD (497 aa)) the chain is Lumenal. N81 carries N-linked (GlcNAc...) asparagine glycosylation. Residue C446 participates in heme binding.

It belongs to the cytochrome P450 family. Heme is required as a cofactor.

Its subcellular location is the endoplasmic reticulum membrane. It catalyses the reaction 3-hydroxybenzyl alcohol + reduced [NADPH--hemoprotein reductase] + O2 = gentisyl alcohol + oxidized [NADPH--hemoprotein reductase] + H2O + H(+). The protein operates within mycotoxin biosynthesis; patulin biosynthesis. Functionally, cytochrome P450 monooxygenase; part of the gene cluster that mediates the biosynthesis of patulin, an acetate-derived tetraketide mycotoxin produced by several fungal species that shows antimicrobial properties against several bacteria. PatI catalyzes the conversion of m-hydroxybenzyl alcohol into gentisyl alcohol. The pathway begins with the synthesis of 6-methylsalicylic acid by the polyketide synthase (PKS) patK via condensation of acetate and malonate units. The 6-methylsalicylic acid decarboxylase patG then catalyzes the decarboxylation of 6-methylsalicylic acid to yield m-cresol (also known as 3-methylphenol). These first reactions occur in the cytosol. The intermediate m-cresol is then transported into the endoplasmic reticulum where the cytochrome P450 monooxygenase patH converts it to m-hydroxybenzyl alcohol, which is further converted to gentisyl alcohol by the cytochrome P450 monooxygenase patI. The oxidoreductases patJ and patO further convert gentisyl alcohol to isoepoxydon in the vacuole. PatN catalyzes then the transformation of isoepoxydon into phyllostine. The cluster protein patF is responsible for the conversion from phyllostine to neopatulin whereas the alcohol dehydrogenase patD converts neopatulin to E-ascladiol. The steps between isoepoxydon and E-ascladiol occur in the cytosol, and E-ascladiol is probably secreted to the extracellular space by one of the cluster-specific transporters patC or patM. Finally, the secreted patulin synthase patE catalyzes the conversion of E-ascladiol to patulin. This chain is Cytochrome P450 monooxygenase patI, found in Penicillium expansum (Blue mold rot fungus).